A 132-amino-acid chain; its full sequence is Small ribosomal subunit protein uS11 (132 aa).

It belongs to the universal ribosomal protein uS11 family. As to quaternary structure, part of the 30S ribosomal subunit. Interacts with proteins S7 and S18. Binds to IF-3.

In terms of biological role, located on the platform of the 30S subunit, it bridges several disparate RNA helices of the 16S rRNA. Forms part of the Shine-Dalgarno cleft in the 70S ribosome. The chain is Small ribosomal subunit protein uS11 from Dichelobacter nodosus (strain VCS1703A).